Here is a 480-residue protein sequence, read N- to C-terminus: Probable glycosyltransferase At5g25310 (480 aa).

The Cytoplasmic portion of the chain corresponds to 1 to 10 (MDKFQSKFTR). The chain crosses the membrane as a helical; Signal-anchor for type II membrane protein span at residues 11–31 (FGFISICFGSIALVLLISHCS). Topologically, residues 32–480 (TSFFDYSFQK…WLRRLNLKLT (449 aa)) are lumenal. 5 N-linked (GlcNAc...) asparagine glycosylation sites follow: N85, N120, N243, N271, and N281.

This sequence belongs to the glycosyltransferase 47 family.

Its subcellular location is the golgi apparatus membrane. Functionally, may be involved in cell wall biosynthesis. This is Probable glycosyltransferase At5g25310 from Arabidopsis thaliana (Mouse-ear cress).